Consider the following 409-residue polypeptide: Multidrug resistance protein MdtG (409 aa).

10 helical membrane-spanning segments follow: residues 16–36, 58–78, 92–112, 115–135, 146–166, 173–193, 224–244, 256–276, 291–311, and 379–399; these read LIVA…VMPF, IVFS…GGLA, LGMG…QFLI, ALLG…ATQV, TLST…GLLA, PVFF…LFCI, LFVT…ILTL, VAFI…LLSA, ILIT…YVQT, and AVFL…WNSL.

This sequence belongs to the major facilitator superfamily. DHA1 family. MdtG (TC 2.A.1.2.20) subfamily.

It is found in the cell inner membrane. Functionally, confers resistance to fosfomycin and deoxycholate. This is Multidrug resistance protein MdtG from Escherichia coli O9:H4 (strain HS).